We begin with the raw amino-acid sequence, 256 residues long: tRNA pseudouridine synthase A (256 aa).

The active-site Nucleophile is Asp49. Tyr104 is a substrate binding site.

This sequence belongs to the tRNA pseudouridine synthase TruA family.

It catalyses the reaction uridine(38/39/40) in tRNA = pseudouridine(38/39/40) in tRNA. Its function is as follows. Formation of pseudouridine at positions 38, 39 and 40 in the anticodon stem and loop of transfer RNAs. This chain is tRNA pseudouridine synthase A, found in Methanopyrus kandleri (strain AV19 / DSM 6324 / JCM 9639 / NBRC 100938).